A 404-amino-acid chain; its full sequence is Imidazolonepropionase (404 aa).

Fe(3+) contacts are provided by H73 and H75. 2 residues coordinate Zn(2+): H73 and H75. R82, Y145, and H178 together coordinate 4-imidazolone-5-propanoate. Y145 provides a ligand contact to N-formimidoyl-L-glutamate. H243 contributes to the Fe(3+) binding site. Residue H243 coordinates Zn(2+). Q246 lines the 4-imidazolone-5-propanoate pocket. D318 contacts Fe(3+). Zn(2+) is bound at residue D318. 2 residues coordinate N-formimidoyl-L-glutamate: N320 and G322. S323 is a 4-imidazolone-5-propanoate binding site.

This sequence belongs to the metallo-dependent hydrolases superfamily. HutI family. Requires Zn(2+) as cofactor. Fe(3+) is required as a cofactor.

It is found in the cytoplasm. It carries out the reaction 4-imidazolone-5-propanoate + H2O = N-formimidoyl-L-glutamate. Its pathway is amino-acid degradation; L-histidine degradation into L-glutamate; N-formimidoyl-L-glutamate from L-histidine: step 3/3. Its function is as follows. Catalyzes the hydrolytic cleavage of the carbon-nitrogen bond in imidazolone-5-propanoate to yield N-formimidoyl-L-glutamate. It is the third step in the universal histidine degradation pathway. The polypeptide is Imidazolonepropionase (Bradyrhizobium diazoefficiens (strain JCM 10833 / BCRC 13528 / IAM 13628 / NBRC 14792 / USDA 110)).